The following is a 2060-amino-acid chain: Unconventional myosin-X (2060 aa).

N-acetylmethionine is present on methionine 1. The Myosin motor domain maps to glutamate 63–glutamate 739. ATP contacts are provided by residues asparagine 104, tyrosine 113, glycine 160–glutamate 165, and asparagine 215. An actin-binding region spans residues leucine 619–threonine 641. 3 IQ domains span residues isoleucine 742–threonine 771, valine 765–valine 794, and leucine 788–glutamate 817. Residues glutamate 814–glutamate 882 are SAH. The stretch at asparagine 883–alanine 933 forms a coiled coil. Phosphoserine occurs at positions 961, 964, and 967. Disordered regions lie at residues serine 971 to asparagine 1039 and serine 1064 to aspartate 1088. Acidic residues predominate over residues proline 991–alanine 1005. Polar residues predominate over residues serine 1064–aspartate 1083. The residue at position 1160 (threonine 1160) is a Phosphothreonine. PH domains follow at residues glutamate 1214–serine 1312 and glutamate 1394–aspartate 1499. One can recognise a MyTH4 domain in the interval leucine 1549–isoleucine 1697. The region spanning methionine 1702 to arginine 2046 is the FERM domain.

It belongs to the TRAFAC class myosin-kinesin ATPase superfamily. Myosin family. Monomer, when in an inactive conformation in the cytosol. Homodimer in its active, membrane-bound conformation; antiparallel coiled coil-mediated dimer formation. Interacts with ECPAS. Interacts with DCC and ITGB5; the presence of DCC inhibits ITGB5 binding. Interacts with tubulin; ITGB5 or DCC binding inhibits tubulin binding. Interacts strongly with CALM3 and weakly with CALM, the CALM3 interaction is essential for function in filopodial extension and motility. Interacts with ITGB1, ITGB3 and ITGB5. Interacts with NEO1. Interacts with VASP.

It localises to the cytoplasm. It is found in the cytosol. The protein resides in the cell projection. The protein localises to the lamellipodium. Its subcellular location is the ruffle. It localises to the cytoskeleton. It is found in the filopodium tip. The protein resides in the cell cortex. The protein localises to the filopodium membrane. Its subcellular location is the cell membrane. Its function is as follows. Myosins are actin-based motor molecules with ATPase activity. Unconventional myosins serve in intracellular movements. MYO10 binds to actin filaments and actin bundles and functions as a plus end-directed motor. Moves with higher velocity and takes larger steps on actin bundles than on single actin filaments. The tail domain binds to membranous compartments containing phosphatidylinositol 3,4,5-trisphosphate or integrins, and mediates cargo transport along actin filaments. Regulates cell shape, cell spreading and cell adhesion. Stimulates the formation and elongation of filopodia. In hippocampal neurons it induces the formation of dendritic filopodia by trafficking the actin-remodeling protein VASP to the tips of filopodia, where it promotes actin elongation. Plays a role in formation of the podosome belt in osteoclasts. This chain is Unconventional myosin-X (Myo10), found in Rattus norvegicus (Rat).